Consider the following 603-residue polypeptide: DNA ligase (603 aa).

Glu-262 is a binding site for ATP. The active-site N6-AMP-lysine intermediate is the Lys-264. Residues Arg-269, Arg-285, Glu-315, Phe-355, Arg-432, and Lys-438 each coordinate ATP.

It belongs to the ATP-dependent DNA ligase family. Mg(2+) serves as cofactor.

It catalyses the reaction ATP + (deoxyribonucleotide)n-3'-hydroxyl + 5'-phospho-(deoxyribonucleotide)m = (deoxyribonucleotide)n+m + AMP + diphosphate.. Its function is as follows. DNA ligase that seals nicks in double-stranded DNA during DNA replication, DNA recombination and DNA repair. This Caldivirga maquilingensis (strain ATCC 700844 / DSM 13496 / JCM 10307 / IC-167) protein is DNA ligase.